The sequence spans 293 residues: Bifunctional protein FolD 1 (293 aa).

NADP(+) is bound by residues 174-176 (GRS) and T240.

It belongs to the tetrahydrofolate dehydrogenase/cyclohydrolase family. Homodimer.

It catalyses the reaction (6R)-5,10-methylene-5,6,7,8-tetrahydrofolate + NADP(+) = (6R)-5,10-methenyltetrahydrofolate + NADPH. The catalysed reaction is (6R)-5,10-methenyltetrahydrofolate + H2O = (6R)-10-formyltetrahydrofolate + H(+). Its pathway is one-carbon metabolism; tetrahydrofolate interconversion. Its function is as follows. Catalyzes the oxidation of 5,10-methylenetetrahydrofolate to 5,10-methenyltetrahydrofolate and then the hydrolysis of 5,10-methenyltetrahydrofolate to 10-formyltetrahydrofolate. In Saccharopolyspora erythraea (strain ATCC 11635 / DSM 40517 / JCM 4748 / NBRC 13426 / NCIMB 8594 / NRRL 2338), this protein is Bifunctional protein FolD 1.